Reading from the N-terminus, the 225-residue chain is Biosynthetic peptidoglycan transglycosylase (225 aa).

A helical membrane pass occupies residues 8–28 (VLLIFIGAILLIQLWIFSSLV).

It belongs to the glycosyltransferase 51 family.

It localises to the cell inner membrane. It catalyses the reaction [GlcNAc-(1-&gt;4)-Mur2Ac(oyl-L-Ala-gamma-D-Glu-L-Lys-D-Ala-D-Ala)](n)-di-trans,octa-cis-undecaprenyl diphosphate + beta-D-GlcNAc-(1-&gt;4)-Mur2Ac(oyl-L-Ala-gamma-D-Glu-L-Lys-D-Ala-D-Ala)-di-trans,octa-cis-undecaprenyl diphosphate = [GlcNAc-(1-&gt;4)-Mur2Ac(oyl-L-Ala-gamma-D-Glu-L-Lys-D-Ala-D-Ala)](n+1)-di-trans,octa-cis-undecaprenyl diphosphate + di-trans,octa-cis-undecaprenyl diphosphate + H(+). It participates in cell wall biogenesis; peptidoglycan biosynthesis. Functionally, peptidoglycan polymerase that catalyzes glycan chain elongation from lipid-linked precursors. This chain is Biosynthetic peptidoglycan transglycosylase, found in Acinetobacter baumannii (strain AB307-0294).